A 504-amino-acid chain; its full sequence is Sucrose phosphorylase (504 aa).

A substrate-binding site is contributed by aspartate 50. Residues histidine 88, 190–192 (RLD), glutamate 232, 289–290 (HD), 342–345 (DLYQ), and arginine 399 contribute to the sucrose site. The active-site Nucleophile is aspartate 192. Residue glutamate 232 is the Proton donor of the active site.

Belongs to the glycosyl hydrolase 13 family. Sucrose phosphorylase subfamily. Homodimer.

It carries out the reaction sucrose + phosphate = D-fructose + alpha-D-glucose 1-phosphate. Its function is as follows. Catalyzes the reversible phosphorolysis of sucrose into alpha-D-glucose 1-phosphate (Glc1P) and D-fructose. Is involved in sucrose degradation. Also displays transglucosylation activity in vitro, by transferring the glucosyl moiety of Glc1P to a broad range of monomeric sugars, such as D- and L-arabinose, D- and L-arabitol, and xylitol. This chain is Sucrose phosphorylase, found in Bifidobacterium adolescentis (strain ATCC 15703 / DSM 20083 / NCTC 11814 / E194a).